The chain runs to 213 residues: Holliday junction branch migration complex subunit RuvA (213 aa).

Residues 1 to 63 (MIGMLTGRVA…EDAFKLYGFL (63 aa)) form a domain I region. Residues 64–142 (DDIDRAWFVH…PTGRSFSIGL (79 aa)) are domain II. The flexible linker stretch occupies residues 143 to 160 (PVHSDDGTTGGAPVAPAG). A domain III region spans residues 161-213 (GDSLAREDAVSALVNLGYNESQARQAVAKILRDADSEAPLGDVIRLSLKELAA).

Belongs to the RuvA family. In terms of assembly, homotetramer. Forms an RuvA(8)-RuvB(12)-Holliday junction (HJ) complex. HJ DNA is sandwiched between 2 RuvA tetramers; dsDNA enters through RuvA and exits via RuvB. An RuvB hexamer assembles on each DNA strand where it exits the tetramer. Each RuvB hexamer is contacted by two RuvA subunits (via domain III) on 2 adjacent RuvB subunits; this complex drives branch migration. In the full resolvosome a probable DNA-RuvA(4)-RuvB(12)-RuvC(2) complex forms which resolves the HJ.

It localises to the cytoplasm. Its function is as follows. The RuvA-RuvB-RuvC complex processes Holliday junction (HJ) DNA during genetic recombination and DNA repair, while the RuvA-RuvB complex plays an important role in the rescue of blocked DNA replication forks via replication fork reversal (RFR). RuvA specifically binds to HJ cruciform DNA, conferring on it an open structure. The RuvB hexamer acts as an ATP-dependent pump, pulling dsDNA into and through the RuvAB complex. HJ branch migration allows RuvC to scan DNA until it finds its consensus sequence, where it cleaves and resolves the cruciform DNA. This Maricaulis maris (strain MCS10) (Caulobacter maris) protein is Holliday junction branch migration complex subunit RuvA.